Here is a 220-residue protein sequence, read N- to C-terminus: 3-keto-L-gulonate-6-phosphate decarboxylase SgbH (220 aa).

Residue Asp11 participates in substrate binding. Mg(2+) contacts are provided by Glu33 and Asp62. Residue Arg192 participates in substrate binding.

This sequence belongs to the HPS/KGPDC family. KGPDC subfamily. As to quaternary structure, homodimer. It depends on Mg(2+) as a cofactor.

The enzyme catalyses 3-dehydro-L-gulonate 6-phosphate + H(+) = L-xylulose 5-phosphate + CO2. In terms of biological role, catalyzes the decarboxylation of 3-keto-L-gulonate-6-P into L-xylulose-5-P. May be involved in the utilization of 2,3-diketo-L-gulonate. In Escherichia coli (strain K12), this protein is 3-keto-L-gulonate-6-phosphate decarboxylase SgbH (sgbH).